Consider the following 2392-residue polypeptide: Protein Ycf2 (2392 aa).

G1658–S1665 is a binding site for ATP.

The protein belongs to the Ycf2 family.

Its subcellular location is the plastid. It is found in the chloroplast stroma. In terms of biological role, probable ATPase of unknown function. Its presence in a non-photosynthetic plant (Epifagus virginiana) and experiments in tobacco indicate that it has an essential function which is probably not related to photosynthesis. In Anthoceros angustus (Hornwort), this protein is Protein Ycf2.